Reading from the N-terminus, the 259-residue chain is uncharacterized protein (259 aa).

Positions 1 to 159 (MIEQFFRPDS…TEIIIKDPYR (159 aa)) constitute an FAD-binding PCMH-type domain.

This is an uncharacterized protein from Escherichia coli O157:H7.